A 195-amino-acid chain; its full sequence is Large ribosomal subunit protein bL32m (195 aa).

Positions 95, 98, 108, and 111 each coordinate Zn(2+).

The protein belongs to the bacterial ribosomal protein bL32 family. As to quaternary structure, component of the mitochondrial large ribosomal subunit (mt-LSU).

Its subcellular location is the mitochondrion. Its function is as follows. Component of the mitochondrial large ribosomal subunit (mt-LSU). The mitochondrial ribosome (mitoribosome) is a large ribonucleoprotein complex responsible for the synthesis of proteins inside mitochondria. The chain is Large ribosomal subunit protein bL32m (mRpL32) from Drosophila melanogaster (Fruit fly).